A 184-amino-acid chain; its full sequence is CASP-like protein 1U1 (184 aa).

Residues 1-30 (MSSTGTTLSASEGDKGFRNGAAPAKSKSHS) are Cytoplasmic-facing. Residues 31-51 (TIALLRLLAFAATLSAFVTMI) form a helical membrane-spanning segment. Residues 52–76 (TNKQKITIGPFTRWSKWHYSDAFMW) are Extracellular-facing. A helical membrane pass occupies residues 77-97 (FVVANCIAFIYLLFAAILGLI). Topologically, residues 98–111 (SHSPMLVKHLVILD) are cytoplasmic. The helical transmembrane segment at 112–132 (LIVSYMLFSAASAATAVAYIG) threads the bilayer. The Extracellular portion of the chain corresponds to 133–154 (KNGISQPGWTAICGVFERYCHH). Residues 155–175 (VAGALVACFLGWLFLTIAVFL) traverse the membrane as a helical segment. At 176-184 (GMRRSPAAV) the chain is on the cytoplasmic side.

It belongs to the Casparian strip membrane proteins (CASP) family. In terms of assembly, homodimer and heterodimers.

Its subcellular location is the cell membrane. The chain is CASP-like protein 1U1 from Marchantia polymorpha (Common liverwort).